A 402-amino-acid chain; its full sequence is Pyruvate synthase subunit PorA (402 aa).

In terms of assembly, heterotetramer of one alpha, one beta, one delta and one gamma chain.

The enzyme catalyses 2 oxidized [2Fe-2S]-[ferredoxin] + pyruvate + CoA = 2 reduced [2Fe-2S]-[ferredoxin] + acetyl-CoA + CO2 + H(+). This chain is Pyruvate synthase subunit PorA (porA), found in Methanosarcina barkeri (strain Fusaro / DSM 804).